Here is a 353-residue protein sequence, read N- to C-terminus: Biotin synthase (353 aa).

Residues 1 to 22 (MTACSTTPTTSATSAQPAAGSP) are compositionally biased toward low complexity. The disordered stretch occupies residues 1 to 30 (MTACSTTPTTSATSAQPAAGSPLQWHARPS). Positions 72-299 (GDIELATLLS…TARVRLSAGR (228 aa)) constitute a Radical SAM core domain. [4Fe-4S] cluster is bound by residues C87, C91, and C94. [2Fe-2S] cluster is bound by residues C131, C162, C222, and R294.

The protein belongs to the radical SAM superfamily. Biotin synthase family. In terms of assembly, homodimer. Requires [4Fe-4S] cluster as cofactor. It depends on [2Fe-2S] cluster as a cofactor.

The catalysed reaction is (4R,5S)-dethiobiotin + (sulfur carrier)-SH + 2 reduced [2Fe-2S]-[ferredoxin] + 2 S-adenosyl-L-methionine = (sulfur carrier)-H + biotin + 2 5'-deoxyadenosine + 2 L-methionine + 2 oxidized [2Fe-2S]-[ferredoxin]. The protein operates within cofactor biosynthesis; biotin biosynthesis; biotin from 7,8-diaminononanoate: step 2/2. Its function is as follows. Catalyzes the conversion of dethiobiotin (DTB) to biotin by the insertion of a sulfur atom into dethiobiotin via a radical-based mechanism. The protein is Biotin synthase of Delftia acidovorans (strain DSM 14801 / SPH-1).